The sequence spans 761 residues: Ribonucleoside-diphosphate reductase subunit alpha (761 aa).

Residues 5–95 form the ATP-cone domain; that stretch reads LFVTKRDGRK…IFHLRKKAYG (91 aa). Residues lysine 9, 15 to 21, threonine 55, and lysine 91 each bind ATP; that span reads EKINLDK. Threonine 209 is a GDP binding site. An intrachain disulfide couples cysteine 225 to cysteine 462. DTTP contacts are provided by residues 232–234, arginine 262, and arginine 269; that span reads DSL. Asparagine 437 is a binding site for GDP. Catalysis depends on asparagine 437, which acts as the Proton acceptor. Cysteine 439 (cysteine radical intermediate) is an active-site residue. Residues glutamate 441 and 623–625 each bind GDP; that span reads ETS. The active-site Proton acceptor is the glutamate 441.

Belongs to the ribonucleoside diphosphate reductase large chain family. As to quaternary structure, tetramer of two alpha and two beta subunits.

It carries out the reaction a 2'-deoxyribonucleoside 5'-diphosphate + [thioredoxin]-disulfide + H2O = a ribonucleoside 5'-diphosphate + [thioredoxin]-dithiol. Its activity is regulated as follows. Under complex allosteric control mediated by deoxynucleoside triphosphates and ATP binding to separate specificity and activation sites on the alpha subunit. The type of nucleotide bound at the specificity site determines substrate preference. It seems probable that ATP makes the enzyme reduce CDP and UDP, dGTP favors ADP reduction and dTTP favors GDP reduction. Stimulated by ATP and inhibited by dATP binding to the activity site. In terms of biological role, provides the precursors necessary for DNA synthesis. Catalyzes the biosynthesis of deoxyribonucleotides from the corresponding ribonucleotides. This is Ribonucleoside-diphosphate reductase subunit alpha (nrdA) from Buchnera aphidicola subsp. Acyrthosiphon pisum (strain APS) (Acyrthosiphon pisum symbiotic bacterium).